We begin with the raw amino-acid sequence, 214 residues long: Guanylate kinase (214 aa).

The region spanning 6 to 192 is the Guanylate kinase-like domain; that stretch reads GTLYIISAPS…ALEDLKAIFR (187 aa). Position 13-20 (13-20) interacts with ATP; it reads APSGAGKT.

The protein belongs to the guanylate kinase family.

The protein localises to the cytoplasm. It carries out the reaction GMP + ATP = GDP + ADP. Its function is as follows. Essential for recycling GMP and indirectly, cGMP. This Pseudomonas savastanoi pv. phaseolicola (strain 1448A / Race 6) (Pseudomonas syringae pv. phaseolicola (strain 1448A / Race 6)) protein is Guanylate kinase.